Reading from the N-terminus, the 350-residue chain is Induced myeloid leukemia cell differentiation protein Mcl-1 homolog (350 aa).

Glycyl lysine isopeptide (Lys-Gly) (interchain with G-Cter in ubiquitin) cross-links involve residues lysine 5 and lysine 40. Residues 104–175 (CASPPEEMEG…PAEEEEDELF (72 aa)) are PEST-like. The residue at position 121 (serine 121) is a Phosphoserine. A Glycyl lysine isopeptide (Lys-Gly) (interchain with G-Cter in ubiquitin) cross-link involves residue lysine 136. The disordered stretch occupies residues 148–170 (GEASSGPGTDGSLPSTPPPAEEE). Serine 159 carries the post-translational modification Phosphoserine; by GSK3-alpha and GSK3-beta. The residue at position 162 (serine 162) is a Phosphoserine. The residue at position 163 (threonine 163) is a Phosphothreonine; by MAPK. Glycyl lysine isopeptide (Lys-Gly) (interchain with G-Cter in ubiquitin) cross-links involve residues lysine 194 and lysine 197. Residues 209 to 223 (ALETLRRVGDGVQRN) carry the BH3 motif. Residues 252–272 (HVFSDGVTNWGRIVTLISFGA) carry the BH1 motif. A BH2 motif is present at residues 304–319 (DWLVKQRGWDGFVEFF). Residues 328-348 (IRNVLLAFAGVAGVGAGLAYL) form a helical membrane-spanning segment.

The protein belongs to the Bcl-2 family. In terms of assembly, interacts with HIF3A (via C-terminus domain). Interacts with BOK, BIK, BAX, BAK1, and TPT1. Interacts with unphosphorylated BAD. Interacts with BMF, BBC3 and PMAIP1. Interacts with BOP. Interacts with BCL2L11; may sequester BCL2L11 to prevent its pro-apoptotic activity. Interacts with GIMAP5 and HSPA8/HSC70; the interaction between HSPA8 and MCL1 is impaired in the absence of GIMAP5. Post-translationally, cleaved by CASP3 during apoptosis, yielding a pro-apoptotic C-terminal fragment. In terms of processing, rapidly degraded in the absence of phosphorylation in the PEST region. Phosphorylated on Ser-159, by GSK3, in response to IL3/interleukin-3 withdrawal. Phosphorylation at Ser-159 induces ubiquitination and proteasomal degradation, abrogating the anti-apoptotic activity. Treatment with taxol or okadaic acid induces phosphorylation on additional sites. Post-translationally, ubiquitinated. Ubiquitination is induced by phosphorylation at Ser-159. Deubiquitinated by USP20; leading to increased stability.

Its subcellular location is the membrane. The protein resides in the cytoplasm. It localises to the mitochondrion. It is found in the nucleus. The protein localises to the nucleoplasm. Its function is as follows. Involved in the regulation of apoptosis versus cell survival, and in the maintenance of viability but not of proliferation. Mediates its effects by interactions with a number of other regulators of apoptosis. The chain is Induced myeloid leukemia cell differentiation protein Mcl-1 homolog (MCL1) from Felis catus (Cat).